Reading from the N-terminus, the 429-residue chain is 3-phosphoshikimate 1-carboxyvinyltransferase (429 aa).

3-phosphoshikimate contacts are provided by lysine 23, serine 24, and arginine 28. Position 23 (lysine 23) interacts with phosphoenolpyruvate. Phosphoenolpyruvate is bound by residues glycine 95 and arginine 123. The 3-phosphoshikimate site is built by serine 168, glutamine 170, aspartate 316, and lysine 343. Glutamine 170 is a binding site for phosphoenolpyruvate. Aspartate 316 (proton acceptor) is an active-site residue. Positions 347 and 389 each coordinate phosphoenolpyruvate.

The protein belongs to the EPSP synthase family. Monomer.

The protein localises to the cytoplasm. It carries out the reaction 3-phosphoshikimate + phosphoenolpyruvate = 5-O-(1-carboxyvinyl)-3-phosphoshikimate + phosphate. The protein operates within metabolic intermediate biosynthesis; chorismate biosynthesis; chorismate from D-erythrose 4-phosphate and phosphoenolpyruvate: step 6/7. Its function is as follows. Catalyzes the transfer of the enolpyruvyl moiety of phosphoenolpyruvate (PEP) to the 5-hydroxyl of shikimate-3-phosphate (S3P) to produce enolpyruvyl shikimate-3-phosphate and inorganic phosphate. The sequence is that of 3-phosphoshikimate 1-carboxyvinyltransferase from Bacillus thuringiensis (strain Al Hakam).